A 404-amino-acid chain; its full sequence is MTVKTPVYLDYAATTPVDKRVAEKMIPYLTETFGNPASNSHAFGWTAEEAVEKARADIAALINADPKEIVFTSGATESDNLAIKGAANFYKTKGKHLITVKTEHKAVLDTMRELERQGFEVTYLGVQENGLIDLEELKAAIRDDTILISIMWVNNEIGVVQNIPAIGEICRERKIAFHVDAAQACGKVPVDVEAAKIDLLSMSAHKVYGPKGIGALYVRRKPRVRLEAQMHGGGHERGFRSGTLPTHQIVGMGEAFRIAKEELAQDTAHYLKLRDIFLKGIEGIEEVYINGDLEHRAPNNLNVSFNFVEGESLIMAVKELAVSSGSACTSASLEPSYVLRALGRNDELAHSSLRITFGRMTTEEEVQFAAELIKSKIGKLRELSPLWEMFKDGIDLNSIEWAAH.

Pyridoxal 5'-phosphate is bound by residues 75–76, Asn-155, Gln-183, and 203–205; these read AT and SAH. An N6-(pyridoxal phosphate)lysine modification is found at Lys-206. Thr-243 is a pyridoxal 5'-phosphate binding site. Residue Cys-328 is the Cysteine persulfide intermediate of the active site. Cys-328 lines the [2Fe-2S] cluster pocket.

Belongs to the class-V pyridoxal-phosphate-dependent aminotransferase family. NifS/IscS subfamily. As to quaternary structure, homodimer. Forms a heterotetramer with IscU, interacts with other sulfur acceptors. Pyridoxal 5'-phosphate is required as a cofactor.

The protein resides in the cytoplasm. The catalysed reaction is (sulfur carrier)-H + L-cysteine = (sulfur carrier)-SH + L-alanine. It functions in the pathway cofactor biosynthesis; iron-sulfur cluster biosynthesis. Functionally, master enzyme that delivers sulfur to a number of partners involved in Fe-S cluster assembly, tRNA modification or cofactor biosynthesis. Catalyzes the removal of elemental sulfur atoms from cysteine to produce alanine. Functions as a sulfur delivery protein for Fe-S cluster synthesis onto IscU, an Fe-S scaffold assembly protein, as well as other S acceptor proteins. The sequence is that of Cysteine desulfurase IscS from Neisseria gonorrhoeae (strain ATCC 700825 / FA 1090).